We begin with the raw amino-acid sequence, 606 residues long: Acetylcholinesterase (606 aa).

Residues 1-28 (MPSCQPGKMPAPWPWWLQLLLCIPSCVA) form the signal peptide. An intrachain disulfide couples C98 to C125. The Acyl-ester intermediate role is filled by S231. The cysteines at positions 285 and 296 are disulfide-linked. N-linked (GlcNAc...) asparagine glycosylation is present at N289. The Charge relay system role is filled by E358. A glycan (N-linked (GlcNAc...) asparagine) is linked at N374. C433 and C552 form a disulfide bridge. H471 (charge relay system) is an active-site residue. The N-linked (GlcNAc...) asparagine glycan is linked to N484.

The protein belongs to the type-B carboxylesterase/lipase family. Isoform S is monomeric. Isoform T can form oligomers, including collagen-tailed forms. Post-translationally, the N-terminus is blocked. Liver and muscle contain both isoform T and isoform S. Venom gland predominantly contains isoform S.

The protein localises to the synapse. Its subcellular location is the secreted. It localises to the cell membrane. It catalyses the reaction acetylcholine + H2O = choline + acetate + H(+). With respect to regulation, inhibited by active site inhibitors: edrophonium, trimethyl-(m-acetamidopheny1)-ammonium iodide, and trimethyl-(p-acetarnidopheny1)-ammonium iodide. Inhibited by both active and peripheral site inhibitors: decamethonium, and BW284c51. Inhibited by peripheral site inhibitors: snake acetylcholinesterase fasciculin-2, propidium, gallamine, D-tubocurarine, and tacrine. Also inhibited by antibodies Elec410 and Fab410. In muscle, it terminates signal transduction at the neuromuscular junction by rapid hydrolysis of the acetylcholine released into the synaptic cleft. In liver, its function is unclear: it could serve as a safeguard against any diffusion of acetylcholine from synapses into the circulation. In venom, its toxic role is unclear: it could result in less musculatory control by rapidly hydrolyzing acetylcholine, or that it works synergistically with alkaline phosphatase (ALP) in paralyzing prey through hypotension. The polypeptide is Acetylcholinesterase (ACHE) (Bungarus fasciatus (Banded krait)).